A 343-amino-acid polypeptide reads, in one-letter code: L-threonine 3-dehydrogenase (343 aa).

Cysteine 38 is a binding site for Zn(2+). Catalysis depends on charge relay system residues threonine 40 and histidine 43. Residues histidine 63, glutamate 64, cysteine 93, cysteine 96, cysteine 99, and cysteine 107 each coordinate Zn(2+). Residues isoleucine 175, aspartate 195, arginine 200, 262–264, and 286–287 contribute to the NAD(+) site; these read LGI and IY.

It belongs to the zinc-containing alcohol dehydrogenase family. As to quaternary structure, homotetramer. It depends on Zn(2+) as a cofactor.

Its subcellular location is the cytoplasm. It carries out the reaction L-threonine + NAD(+) = (2S)-2-amino-3-oxobutanoate + NADH + H(+). Its pathway is amino-acid degradation; L-threonine degradation via oxydo-reductase pathway; glycine from L-threonine: step 1/2. Functionally, catalyzes the NAD(+)-dependent oxidation of L-threonine to 2-amino-3-ketobutyrate. The sequence is that of L-threonine 3-dehydrogenase from Paraburkholderia xenovorans (strain LB400).